The primary structure comprises 379 residues: Alcohol dehydrogenase 1 (379 aa).

C47, T49, H69, C99, C102, C105, C113, and C177 together coordinate Zn(2+). 2 residues coordinate an alcohol: T49 and H69. An NAD(+)-binding site is contributed by T49. NAD(+) is bound by residues 202–207 (GLGAVG), D226, R231, T272, V295, 295–297 (VGV), F322, and R372.

It belongs to the zinc-containing alcohol dehydrogenase family. As to quaternary structure, homodimer. Requires Zn(2+) as cofactor.

The protein resides in the cytoplasm. It catalyses the reaction a primary alcohol + NAD(+) = an aldehyde + NADH + H(+). It carries out the reaction a secondary alcohol + NAD(+) = a ketone + NADH + H(+). This Oryza sativa subsp. indica (Rice) protein is Alcohol dehydrogenase 1 (ADH1).